We begin with the raw amino-acid sequence, 199 residues long: Ribonuclease HII (199 aa).

An RNase H type-2 domain is found at 7 to 196; sequence PWVCGVDEAG…VRELMANEKD (190 aa). A divalent metal cation contacts are provided by D13, E14, and D105.

It belongs to the RNase HII family. Mn(2+) serves as cofactor. Mg(2+) is required as a cofactor.

The protein localises to the cytoplasm. It catalyses the reaction Endonucleolytic cleavage to 5'-phosphomonoester.. Endonuclease that specifically degrades the RNA of RNA-DNA hybrids. The polypeptide is Ribonuclease HII (Nitrosospira multiformis (strain ATCC 25196 / NCIMB 11849 / C 71)).